Here is a 324-residue protein sequence, read N- to C-terminus: Glyceraldehyde-3-phosphate dehydrogenase 1 (324 aa).

NAD(+)-binding positions include 13–14 (RI), D35, and K85. D-glyceraldehyde 3-phosphate-binding positions include 157-159 (SCT), T188, 217-218 (TG), and R240. C158 serves as the catalytic Nucleophile. N322 is an NAD(+) binding site.

Belongs to the glyceraldehyde-3-phosphate dehydrogenase family. As to quaternary structure, homotetramer.

The protein resides in the cytoplasm. It carries out the reaction D-glyceraldehyde 3-phosphate + phosphate + NAD(+) = (2R)-3-phospho-glyceroyl phosphate + NADH + H(+). It participates in carbohydrate degradation; glycolysis; pyruvate from D-glyceraldehyde 3-phosphate: step 1/5. This Globodera rostochiensis (Golden nematode worm) protein is Glyceraldehyde-3-phosphate dehydrogenase 1 (GPD-1).